Consider the following 540-residue polypeptide: Chaperonin GroEL (540 aa).

ATP is bound by residues 30–33 (TLAP), Lys51, 87–91 (DGTTT), Gly415, 479–481 (NAA), and Asp495.

The protein belongs to the chaperonin (HSP60) family. As to quaternary structure, forms a cylinder of 14 subunits composed of two heptameric rings stacked back-to-back. Interacts with the co-chaperonin GroES.

The protein localises to the cytoplasm. It carries out the reaction ATP + H2O + a folded polypeptide = ADP + phosphate + an unfolded polypeptide.. In terms of biological role, together with its co-chaperonin GroES, plays an essential role in assisting protein folding. The GroEL-GroES system forms a nano-cage that allows encapsulation of the non-native substrate proteins and provides a physical environment optimized to promote and accelerate protein folding. This Methylovorus sp. (strain SS1 / DSM 11726) protein is Chaperonin GroEL.